We begin with the raw amino-acid sequence, 465 residues long: Deoxyguanosinetriphosphate triphosphohydrolase-like protein (465 aa).

The segment at 1–22 (MKWDKLLNDKRRRESGVTRSKN) is disordered. Positions 63–252 (RLTHSMEVST…LEVADDIAYL (190 aa)) constitute an HD domain.

The protein belongs to the dGTPase family. Type 3 subfamily.

The sequence is that of Deoxyguanosinetriphosphate triphosphohydrolase-like protein from Listeria monocytogenes serovar 1/2a (strain ATCC BAA-679 / EGD-e).